The following is a 174-amino-acid chain: Glycine-rich protein 5 (174 aa).

The first 22 residues, 1–22 (MASKSLFLVALLVGSFAFTSFA), serve as a signal peptide directing secretion.

Mostly expressed in immature seed pods, and, to a lower extent, in stems and leaves. Present in phloem and epiderm in leaves, stems, flowers and fruits.

Its subcellular location is the vacuole. In terms of biological role, involved in organ growth by promoting cell elongation processes. The protein is Glycine-rich protein 5 of Arabidopsis thaliana (Mouse-ear cress).